We begin with the raw amino-acid sequence, 859 residues long: Ribose import ATP-binding protein RbsA 1 (859 aa).

Positions 1–351 are disordered; it reads MRASLENGDD…AARAPDEASE (351 aa). A unknown region spans residues 1-353; that stretch reads MRASLENGDD…RAPDEASEEA (353 aa). Residues 8-17 are compositionally biased toward basic and acidic residues; it reads GDDHDAHRLV. The span at 28–43 shows a compositional bias: basic residues; it reads RAARRRAFARARRGER. 3 stretches are compositionally biased toward basic and acidic residues: residues 44–80, 89–129, and 137–167; these read RARG…DRRA, RREQ…EEGG, and RERE…EGDR. Residues 168–179 are compositionally biased toward basic residues; that stretch reads RRRRSRDPRRHP. Basic and acidic residues-rich tracts occupy residues 193 to 214, 239 to 250, 263 to 281, 288 to 301, and 308 to 323; these read GARE…GARE, RLDGRAVRDRGV, AGGD…RDVR, DSPR…EEVG, and DSGR…REDV. 2 ABC transporter domains span residues 358–594 and 607–851; these read LALT…VGRR and RDAA…TSDV. 390–397 lines the ATP pocket; that stretch reads GENGAGKS.

This sequence belongs to the ABC transporter superfamily. Ribose importer (TC 3.A.1.2.1) family. In terms of assembly, the complex is composed of an ATP-binding protein (RbsA), two transmembrane proteins (RbsC) and a solute-binding protein (RbsB).

It is found in the cell inner membrane. The enzyme catalyses D-ribose(out) + ATP + H2O = D-ribose(in) + ADP + phosphate + H(+). Functionally, part of the ABC transporter complex RbsABC involved in ribose import. Responsible for energy coupling to the transport system. This is Ribose import ATP-binding protein RbsA 1 from Burkholderia pseudomallei (strain 1710b).